The sequence spans 967 residues: uncharacterized protein (967 aa).

Residues 1-29 (MKKKLKSVLIWFLIFTFNLSLGSFREVFA) form the signal peptide. 2 BIG2 domains span residues 38 to 107 (TAIT…QDGS) and 133 to 190 (LPVG…VNDG).

This is an uncharacterized protein from Clostridium acetobutylicum (strain ATCC 824 / DSM 792 / JCM 1419 / IAM 19013 / LMG 5710 / NBRC 13948 / NRRL B-527 / VKM B-1787 / 2291 / W).